The primary structure comprises 376 residues: DNA replication and repair protein RecF (376 aa).

30–37 is a binding site for ATP; sequence GHNGVGKT.

This sequence belongs to the RecF family.

The protein localises to the cytoplasm. In terms of biological role, the RecF protein is involved in DNA metabolism; it is required for DNA replication and normal SOS inducibility. RecF binds preferentially to single-stranded, linear DNA. It also seems to bind ATP. The sequence is that of DNA replication and repair protein RecF from Salinispora arenicola (strain CNS-205).